Here is a 956-residue protein sequence, read N- to C-terminus: MAM domain-containing glycosylphosphatidylinositol anchor protein 2 (956 aa).

A signal peptide spans 1-25 (MDLLYGLVWLLTVLLEGISGQGVYA). Ig-like domains lie at 27–127 (PTVR…IRVD) and 134–232 (PVVT…KMVS). Cystine bridges form between Cys-62/Cys-110 and Cys-159/Cys-216. N-linked (GlcNAc...) asparagine glycosylation is found at Asn-92, Asn-213, and Asn-237. 4 Ig-like domains span residues 242 to 328 (PSIK…NIIV), 340 to 436 (PDPY…VNIS), 442 to 533 (PNLT…ALVQ), and 540 to 627 (PAVE…FLVT). Disulfide bonds link Cys-264-Cys-310 and Cys-359-Cys-417. 5 N-linked (GlcNAc...) asparagine glycosylation sites follow: Asn-434, Asn-443, Asn-504, Asn-610, and Asn-703. Cystine bridges form between Cys-465-Cys-515 and Cys-561-Cys-611. One can recognise a Fibronectin type-III domain in the interval 638–739 (DTYNPVWQNR…IRVIKYSAPV (102 aa)). Residues 746 to 921 (FHCGFEDGNI…VSIAEGECAK (176 aa)) form the MAM domain. Residue Asp-931 is the site of GPI-anchor amidated aspartate attachment. A propeptide spans 932–956 (GAVGILVHIWLFPIIVLISILSPRR) (removed in mature form).

In terms of assembly, interacts (through the Ig-like domains) with NLGN2. As to expression, detected in Leydig cells, syncytiotrophoblast, duodenal villi epithelial cells and neutrophils from kidney and cutaneous squamous cell carcinoma (at protein level).

It is found in the cell membrane. May be involved in cell-cell interactions. The chain is MAM domain-containing glycosylphosphatidylinositol anchor protein 2 (MDGA2) from Homo sapiens (Human).